A 181-amino-acid polypeptide reads, in one-letter code: Regulator of G-protein signaling 5 (181 aa).

The RGS domain occupies 64 to 180 (SLDKLLQNSY…VRSEFYKELI (117 aa)).

Expressed in heart and muscle.

The protein resides in the cytoplasm. It is found in the membrane. In terms of biological role, inhibits signal transduction by increasing the GTPase activity of G protein alpha subunits thereby driving them into their inactive GDP-bound form. Binds to G(i)-alpha and G(o)-alpha, but not to G(s)-alpha. The protein is Regulator of G-protein signaling 5 (Rgs5) of Mus musculus (Mouse).